Here is a 1493-residue protein sequence, read N- to C-terminus: Mitogen-activated protein kinase kinase kinase 1 (1493 aa).

Low complexity-rich tracts occupy residues Met1–Glu23 and Gly33–Gly42. 2 disordered regions span residues Met1–Glu171 and Leu222–Ser295. Residue Ala2 is modified to N-acetylalanine. A Phosphoserine modification is found at Ser21. Residues Pro84–Glu94 are compositionally biased toward pro residues. 2 stretches are compositionally biased toward low complexity: residues Pro95 to Ala108 and Ala135 to Gly151. The residue at position 137 (Ser137) is a Phosphoserine. Over residues Arg152–Glu171 the composition is skewed to basic and acidic residues. Residues Ser230 to Pro257 show a composition bias toward low complexity. A Phosphoserine modification is found at Ser265. Residue Thr275 is modified to Phosphothreonine. Phosphoserine occurs at positions 282, 287, and 290. An SWIM-type zinc finger spans residues Tyr328 to Phe356. An RING-type zinc finger spans residues Cys433–Arg482. A compositionally biased stretch (polar residues) spans Ser496–Arg506. Disordered stretches follow at residues Ser496–Arg524, Asp866–Ser910, Val923–Ser955, and Pro992–Asn1060. 3 positions are modified to phosphoserine: Ser497, Ser521, and Ser910. A compositionally biased stretch (low complexity) spans Gly507–Gln522. Polar residues-rich tracts occupy residues Leu925–Thr940 and Ala998–Cys1014. Residues Ser999 and Ser1024 each carry the phosphoserine modification. The span at Gly1049–Asn1060 shows a compositional bias: polar residues. Positions Trp1224 to Phe1489 constitute a Protein kinase domain. Residues Ile1230–Cys1238 and Lys1253 each bind ATP. Asp1350 acts as the Proton acceptor in catalysis. Phosphothreonine; by autocatalysis is present on residues Thr1381 and Thr1393.

Belongs to the protein kinase superfamily. STE Ser/Thr protein kinase family. MAP kinase kinase kinase subfamily. As to quaternary structure, binds both upstream activators and downstream substrates in multimolecular complexes through its N-terminus. Oligomerizes after binding MAP4K2 or TRAF2. Interacts (via the kinase catalytic domain) with STK38. Interacts with GRIPAP1. Requires Mg(2+) as cofactor. In terms of processing, autophosphorylated. Most highly expressed in spleen, kidney and lung.

Its subcellular location is the membrane. The catalysed reaction is L-seryl-[protein] + ATP = O-phospho-L-seryl-[protein] + ADP + H(+). The enzyme catalyses L-threonyl-[protein] + ATP = O-phospho-L-threonyl-[protein] + ADP + H(+). With respect to regulation, activated by autophosphorylation on Thr-1381 and Thr-1393 following oligomerization. Functionally, component of a protein kinase signal transduction cascade. Activates the ERK and JNK kinase pathways by phosphorylation of MAP2K1 and MAP2K4. May phosphorylate the MAPK8/JNK1 kinase. Activates CHUK and IKBKB, the central protein kinases of the NF-kappa-B pathway. This is Mitogen-activated protein kinase kinase kinase 1 (Map3k1) from Rattus norvegicus (Rat).